Reading from the N-terminus, the 536-residue chain is Anthranilate synthase component 1 2 (536 aa).

L-tryptophan is bound by residues S59 and 299–301 (PYM). A chorismate-binding site is contributed by 334-335 (GT). Mg(2+) is bound at residue E361. Residues Y449, R469, 487 to 489 (GAG), and G489 each bind chorismate. E502 contacts Mg(2+).

It belongs to the anthranilate synthase component I family. In terms of assembly, tetramer of two components I and two components II. It depends on Mg(2+) as a cofactor.

It catalyses the reaction chorismate + L-glutamine = anthranilate + pyruvate + L-glutamate + H(+). It functions in the pathway amino-acid biosynthesis; L-tryptophan biosynthesis; L-tryptophan from chorismate: step 1/5. In Haloarcula marismortui (strain ATCC 43049 / DSM 3752 / JCM 8966 / VKM B-1809) (Halobacterium marismortui), this protein is Anthranilate synthase component 1 2 (trpE2).